The sequence spans 352 residues: Maleylacetate reductase (352 aa).

The protein belongs to the iron-containing alcohol dehydrogenase family.

The catalysed reaction is 3-oxoadipate + NAD(+) = maleylacetate + NADH + H(+). It carries out the reaction 3-oxoadipate + NADP(+) = maleylacetate + NADPH + H(+). It participates in aromatic compound metabolism; 3-chlorocatechol degradation. The sequence is that of Maleylacetate reductase (clcE) from Pseudomonas aeruginosa.